A 308-amino-acid polypeptide reads, in one-letter code: Mycothiol acetyltransferase (308 aa).

2 N-acetyltransferase domains span residues 16 to 152 (ETLA…RPLA) and 165 to 308 (VTVR…RTES). E47 contacts 1D-myo-inositol 2-(L-cysteinylamino)-2-deoxy-alpha-D-glucopyranoside. 91–93 (LVV) serves as a coordination point for acetyl-CoA. 1D-myo-inositol 2-(L-cysteinylamino)-2-deoxy-alpha-D-glucopyranoside-binding residues include E192, K231, and E240. Acetyl-CoA is bound by residues 244–246 (LGV) and 251–257 (QGGGLGK). Y278 is a 1D-myo-inositol 2-(L-cysteinylamino)-2-deoxy-alpha-D-glucopyranoside binding site.

This sequence belongs to the acetyltransferase family. MshD subfamily. In terms of assembly, monomer.

The catalysed reaction is 1D-myo-inositol 2-(L-cysteinylamino)-2-deoxy-alpha-D-glucopyranoside + acetyl-CoA = mycothiol + CoA + H(+). Catalyzes the transfer of acetyl from acetyl-CoA to desacetylmycothiol (Cys-GlcN-Ins) to form mycothiol. The chain is Mycothiol acetyltransferase from Streptomyces avermitilis (strain ATCC 31267 / DSM 46492 / JCM 5070 / NBRC 14893 / NCIMB 12804 / NRRL 8165 / MA-4680).